Reading from the N-terminus, the 122-residue chain is Small ribosomal subunit protein uS13 (122 aa).

The segment at 98–122 (VRGQRTKTNARTRKGKRKTVGAKAK) is disordered.

This sequence belongs to the universal ribosomal protein uS13 family. Part of the 30S ribosomal subunit. Forms a loose heterodimer with protein S19. Forms two bridges to the 50S subunit in the 70S ribosome.

Located at the top of the head of the 30S subunit, it contacts several helices of the 16S rRNA. In the 70S ribosome it contacts the 23S rRNA (bridge B1a) and protein L5 of the 50S subunit (bridge B1b), connecting the 2 subunits; these bridges are implicated in subunit movement. Contacts the tRNAs in the A and P-sites. In Nautilia profundicola (strain ATCC BAA-1463 / DSM 18972 / AmH), this protein is Small ribosomal subunit protein uS13.